A 350-amino-acid chain; its full sequence is Ion-translocating oxidoreductase complex subunit D (350 aa).

The next 5 membrane-spanning stretches (helical) occupy residues 19 to 39 (LMLL…WFFG), 41 to 61 (GTLI…ALVL), 67 to 87 (PVKP…IGLS), 88 to 108 (LPPL…IIIA), and 122 to 142 (PAMV…TSWL). An FMN phosphoryl threonine modification is found at threonine 186. 4 consecutive transmembrane segments (helical) span residues 213–233 (WGGI…LFLL), 242–262 (IPGA…LMTP), 264–284 (ATAT…AFFI), and 299–316 (LVYG…RRFG).

Belongs to the NqrB/RnfD family. As to quaternary structure, the complex is composed of six subunits: RnfA, RnfB, RnfC, RnfD, RnfE and RnfG. The cofactor is FMN.

The protein localises to the cell inner membrane. Functionally, part of a membrane-bound complex that couples electron transfer with translocation of ions across the membrane. The chain is Ion-translocating oxidoreductase complex subunit D from Aeromonas hydrophila subsp. hydrophila (strain ATCC 7966 / DSM 30187 / BCRC 13018 / CCUG 14551 / JCM 1027 / KCTC 2358 / NCIMB 9240 / NCTC 8049).